A 427-amino-acid polypeptide reads, in one-letter code: Peptidase B (427 aa).

Lysine 195 and aspartate 200 together coordinate Mn(2+). The active site involves lysine 207. Residues aspartate 218, aspartate 277, and glutamate 279 each contribute to the Mn(2+) site. The active site involves arginine 281.

The protein belongs to the peptidase M17 family. Homohexamer. The cofactor is Mn(2+).

Its subcellular location is the cytoplasm. It catalyses the reaction Release of an N-terminal amino acid, Xaa, from a peptide or arylamide. Xaa is preferably Glu or Asp but may be other amino acids, including Leu, Met, His, Cys and Gln.. In terms of biological role, probably plays an important role in intracellular peptide degradation. The chain is Peptidase B from Salmonella choleraesuis (strain SC-B67).